Here is a 192-residue protein sequence, read N- to C-terminus: Molybdenum cofactor guanylyltransferase (192 aa).

Residues lysine 21, aspartate 67, and aspartate 101 each contribute to the GTP site. A Mg(2+)-binding site is contributed by aspartate 101.

The protein belongs to the MobA family. In terms of assembly, monomer. Mg(2+) is required as a cofactor.

It is found in the cytoplasm. The enzyme catalyses Mo-molybdopterin + GTP + H(+) = Mo-molybdopterin guanine dinucleotide + diphosphate. Transfers a GMP moiety from GTP to Mo-molybdopterin (Mo-MPT) cofactor (Moco or molybdenum cofactor) to form Mo-molybdopterin guanine dinucleotide (Mo-MGD) cofactor. This chain is Molybdenum cofactor guanylyltransferase, found in Neisseria meningitidis serogroup C / serotype 2a (strain ATCC 700532 / DSM 15464 / FAM18).